A 580-amino-acid polypeptide reads, in one-letter code: Extracellular protease (580 aa).

The signal sequence occupies residues 1-32; the sequence is MSTASLRKRTGSLTILGASALTSLLLAMPAFA. Residues 33-136 constitute a propeptide that is removed on maturation; the sequence is GEVYLDGLAT…VEVDQILHAT (104 aa). The 319-residue stretch at 147 to 465 folds into the Peptidase S8 domain; the sequence is QWAFGTTNAG…AGIVNADAAV (319 aa). Active-site charge relay system residues include Asp-177 and His-237. 2 disulfides stabilise this stretch: Cys-225/Cys-273 and Cys-315/Cys-352. The Charge relay system role is filled by Ser-409. Cys-450 and Cys-454 form a disulfide bridge.

The protein belongs to the peptidase S8 family.

It is found in the secreted. The protein is Extracellular protease of Xanthomonas campestris pv. campestris (strain ATCC 33913 / DSM 3586 / NCPPB 528 / LMG 568 / P 25).